The sequence spans 187 residues: Probable chorismate pyruvate-lyase (187 aa).

Arginine 80, leucine 118, and glutamate 170 together coordinate substrate.

The protein belongs to the UbiC family.

The protein resides in the cytoplasm. The enzyme catalyses chorismate = 4-hydroxybenzoate + pyruvate. It participates in cofactor biosynthesis; ubiquinone biosynthesis. Functionally, removes the pyruvyl group from chorismate, with concomitant aromatization of the ring, to provide 4-hydroxybenzoate (4HB) for the ubiquinone pathway. The protein is Probable chorismate pyruvate-lyase of Pseudomonas fluorescens (strain ATCC BAA-477 / NRRL B-23932 / Pf-5).